Here is a 301-residue protein sequence, read N- to C-terminus: Ribonuclease Z (301 aa).

Residues His-61, His-63, Asp-65, His-66, His-140, Asp-211, and His-269 each contribute to the Zn(2+) site. The active-site Proton acceptor is Asp-65.

Belongs to the RNase Z family. In terms of assembly, homodimer. The cofactor is Zn(2+).

The catalysed reaction is Endonucleolytic cleavage of RNA, removing extra 3' nucleotides from tRNA precursor, generating 3' termini of tRNAs. A 3'-hydroxy group is left at the tRNA terminus and a 5'-phosphoryl group is left at the trailer molecule.. Functionally, zinc phosphodiesterase, which displays some tRNA 3'-processing endonuclease activity. Probably involved in tRNA maturation, by removing a 3'-trailer from precursor tRNA. This is Ribonuclease Z from Bradyrhizobium sp. (strain ORS 278).